Consider the following 285-residue polypeptide: 2-methoxy-6-polyprenyl-1,4-benzoquinol methylase, mitochondrial (285 aa).

Residues 1–30 constitute a mitochondrion transit peptide; sequence MKGATNLFKSMRKPTNVGNFRQFSVNQVNS. Residues threonine 106, aspartate 126, 156–157, and serine 173 contribute to the S-adenosyl-L-methionine site; that span reads NA.

It belongs to the class I-like SAM-binding methyltransferase superfamily. MenG/UbiE family. Component of a multi-subunit COQ enzyme complex.

It localises to the mitochondrion inner membrane. The catalysed reaction is a 2-methoxy-6-(all-trans-polyprenyl)benzene-1,4-diol + S-adenosyl-L-methionine = a 5-methoxy-2-methyl-3-(all-trans-polyprenyl)benzene-1,4-diol + S-adenosyl-L-homocysteine + H(+). It participates in cofactor biosynthesis; ubiquinone biosynthesis. In terms of biological role, methyltransferase required for the conversion of 2-polyprenyl-6-methoxy-1,4-benzoquinol (DDMQH2) to 2-polyprenyl-3-methyl-6-methoxy-1,4-benzoquinol (DMQH2). The protein is 2-methoxy-6-polyprenyl-1,4-benzoquinol methylase, mitochondrial of Caenorhabditis elegans.